The chain runs to 242 residues: N-alpha-acetyltransferase 60 (242 aa).

Topologically, residues 1-192 are cytoplasmic; that stretch reads MTDVVPTTAL…GGHPPWTIFD (192 aa). An N-acetyltransferase domain is found at 13 to 182; that stretch reads IQLRLLCHDD…DGFTYVLYIN (170 aa). Residue Tyr38 participates in substrate binding. Tyr97 is a catalytic residue. Residue Leu99 participates in substrate binding. Acetyl-CoA contacts are provided by residues 101 to 103 and 109 to 114; these read LGV and KHGIGS. Residue His138 is part of the active site. Acetyl-CoA-binding positions include Asn143 and 150–153; that span reads YENR. Residues 162–173 are required for homodimerization; it reads PYYYSIRGVLKD. Tyr165 lines the substrate pocket. Residues 193–236 constitute an intramembrane region (helical); sequence YIHHIGSALASLSPCSIPQRIYRQAQNLLRSFLPWSGISSKSGI. Topologically, residues 237–242 are cytoplasmic; the sequence is EYSRTM.

Belongs to the acetyltransferase family. NAA60 subfamily. In terms of assembly, monomer and homodimer; monomer in presence of substrate and homodimer in its absence.

Its subcellular location is the golgi apparatus membrane. The catalysed reaction is N-terminal L-methionyl-[transmembrane protein] + acetyl-CoA = N-terminal N(alpha)-acetyl-L-methionyl-[transmembrane protein] + CoA + H(+). It catalyses the reaction L-lysyl-[protein] + acetyl-CoA = N(6)-acetyl-L-lysyl-[protein] + CoA + H(+). N-alpha-acetyltransferase that specifically mediates the acetylation of N-terminal residues of the transmembrane proteins, with a strong preference for N-termini facing the cytosol. Displays N-terminal acetyltransferase activity towards a range of N-terminal sequences including those starting with Met-Lys, Met-Val, Met-Ala and Met-Met. Required for normal chromosomal segregation during anaphase. May also show histone acetyltransferase activity; such results are however unclear in vivo and would require additional experimental evidences. This is N-alpha-acetyltransferase 60 (naa60) from Danio rerio (Zebrafish).